We begin with the raw amino-acid sequence, 241 residues long: Proteasome subunit alpha (241 aa).

The protein belongs to the peptidase T1A family. As to quaternary structure, the 20S proteasome core is composed of 14 alpha and 14 beta subunits that assemble into four stacked heptameric rings, resulting in a barrel-shaped structure. The two inner rings, each composed of seven catalytic beta subunits, are sandwiched by two outer rings, each composed of seven alpha subunits. The catalytic chamber with the active sites is on the inside of the barrel. Has a gated structure, the ends of the cylinder being occluded by the N-termini of the alpha-subunits. Is capped at one or both ends by the proteasome regulatory ATPase, PAN.

It localises to the cytoplasm. With respect to regulation, the formation of the proteasomal ATPase PAN-20S proteasome complex, via the docking of the C-termini of PAN into the intersubunit pockets in the alpha-rings, triggers opening of the gate for substrate entry. Interconversion between the open-gate and close-gate conformations leads to a dynamic regulation of the 20S proteasome proteolysis activity. Functionally, component of the proteasome core, a large protease complex with broad specificity involved in protein degradation. The chain is Proteasome subunit alpha from Saccharolobus solfataricus (strain ATCC 35092 / DSM 1617 / JCM 11322 / P2) (Sulfolobus solfataricus).